Here is a 443-residue protein sequence, read N- to C-terminus: Glutamyl-tRNA reductase (443 aa).

Residues 49-52, Ser109, 114-116, and Gln120 each bind substrate; these read TCNR and EPQ. Catalysis depends on Cys50, which acts as the Nucleophile. 189-194 serves as a coordination point for NADP(+); that stretch reads GAGKMC. The disordered stretch occupies residues 421-443; sequence PDSQQTGGDSVEKDADSKQDLTS. Positions 430 to 443 are enriched in basic and acidic residues; the sequence is SVEKDADSKQDLTS.

It belongs to the glutamyl-tRNA reductase family. Homodimer.

The catalysed reaction is (S)-4-amino-5-oxopentanoate + tRNA(Glu) + NADP(+) = L-glutamyl-tRNA(Glu) + NADPH + H(+). The protein operates within porphyrin-containing compound metabolism; protoporphyrin-IX biosynthesis; 5-aminolevulinate from L-glutamyl-tRNA(Glu): step 1/2. Functionally, catalyzes the NADPH-dependent reduction of glutamyl-tRNA(Glu) to glutamate 1-semialdehyde (GSA). The chain is Glutamyl-tRNA reductase from Syntrophotalea carbinolica (strain DSM 2380 / NBRC 103641 / GraBd1) (Pelobacter carbinolicus).